A 123-amino-acid chain; its full sequence is Small ribosomal subunit protein uS12c (123 aa).

This sequence belongs to the universal ribosomal protein uS12 family. In terms of assembly, part of the 30S ribosomal subunit.

It localises to the plastid. The protein localises to the chloroplast. With S4 and S5 plays an important role in translational accuracy. Located at the interface of the 30S and 50S subunits. The polypeptide is Small ribosomal subunit protein uS12c (rps12) (Oenothera elata subsp. hookeri (Hooker's evening primrose)).